A 137-amino-acid polypeptide reads, in one-letter code: Large ribosomal subunit protein uL16 (137 aa).

It belongs to the universal ribosomal protein uL16 family. As to quaternary structure, part of the 50S ribosomal subunit.

In terms of biological role, binds 23S rRNA and is also seen to make contacts with the A and possibly P site tRNAs. This chain is Large ribosomal subunit protein uL16, found in Paracoccus denitrificans (strain Pd 1222).